Here is a 359-residue protein sequence, read N- to C-terminus: 5-amino-6-(D-ribitylamino)uracil--L-tyrosine 4-hydroxyphenyl transferase (359 aa).

The Radical SAM core domain occupies 45–282 (VTYVVNANIN…VYAISRIFFK (238 aa)). [4Fe-4S] cluster contacts are provided by C59, C63, and C66.

This sequence belongs to the radical SAM superfamily. CofH family. As to quaternary structure, consists of two subunits, CofG and CofH. Requires [4Fe-4S] cluster as cofactor.

The catalysed reaction is 5-amino-6-(D-ribitylamino)uracil + L-tyrosine + S-adenosyl-L-methionine = 5-amino-5-(4-hydroxybenzyl)-6-(D-ribitylimino)-5,6-dihydrouracil + 2-iminoacetate + 5'-deoxyadenosine + L-methionine + H(+). Its pathway is cofactor biosynthesis; coenzyme F0 biosynthesis. Catalyzes the radical-mediated synthesis of 5-amino-5-(4-hydroxybenzyl)-6-(D-ribitylimino)-5,6-dihydrouracil from 5-amino-6-(D-ribitylamino)uracil and L-tyrosine. The protein is 5-amino-6-(D-ribitylamino)uracil--L-tyrosine 4-hydroxyphenyl transferase of Methanococcus maripaludis (strain C7 / ATCC BAA-1331).